The primary structure comprises 250 residues: Proteasome subunit alpha type-7 (250 aa).

Belongs to the peptidase T1A family. In terms of assembly, the 26S proteasome consists of a 20S proteasome core and two 19S regulatory subunits. The 20S proteasome core is composed of 28 subunits that are arranged in four stacked rings, resulting in a barrel-shaped structure. The two end rings are each formed by seven alpha subunits, and the two central rings are each formed by seven beta subunits. The catalytic chamber with the active sites is on the inside of the barrel.

Its subcellular location is the cytoplasm. The protein resides in the nucleus. In terms of biological role, the proteasome is a multicatalytic proteinase complex which is characterized by its ability to cleave peptides with Arg, Phe, Tyr, Leu, and Glu adjacent to the leaving group at neutral or slightly basic pH. The proteasome has an ATP-dependent proteolytic activity. The sequence is that of Proteasome subunit alpha type-7 (psmA7) from Dictyostelium discoideum (Social amoeba).